Here is a 317-residue protein sequence, read N- to C-terminus: UAP56-interacting factor (317 aa).

N-acetylmethionine is present on methionine 1. Residues 1-23 (MNRFGTRLVGATATTPPAPKARS) form a disordered region. Position 14 is a phosphothreonine (threonine 14). A Phosphoserine modification is found at serine 23. The short motif at 26–44 (NLDKIDMSLDEIIKLNRKE) is the UAP56-binding motif element. Residues serine 60 and serine 117 each carry the phosphoserine modification. A Glycyl lysine isopeptide (Lys-Gly) (interchain with G-Cter in SUMO1) cross-link involves residue lysine 139. Lysine 260 participates in a covalent cross-link: Glycyl lysine isopeptide (Lys-Gly) (interchain with G-Cter in SUMO2).

The protein belongs to the UIF family. In terms of assembly, interacts with DDX39B/UAP56 and NXF1; interaction with DDX39B/UAP56 and NXF1 are mutually exclusive. Interacts with SSRP1; required for its recruitment to mRNAs. Interacts with CHTOP.

Its subcellular location is the nucleus. It localises to the nucleoplasm. It is found in the nucleus speckle. Its function is as follows. Required for mRNA export from the nucleus to the cytoplasm. Acts as an adapter that uses the DDX39B/UAP56-NFX1 pathway to ensure efficient mRNA export and delivering to the nuclear pore. Associates with spliced and unspliced mRNAs simultaneously with ALYREF/THOC4. This chain is UAP56-interacting factor (Fyttd1), found in Rattus norvegicus (Rat).